The chain runs to 87 residues: Translation initiation factor IF-1 2 (87 aa).

One can recognise an S1-like domain in the interval 1–72 (MAKEEVIEME…TKGRINFRHK (72 aa)).

This sequence belongs to the IF-1 family. In terms of assembly, component of the 30S ribosomal translation pre-initiation complex which assembles on the 30S ribosome in the order IF-2 and IF-3, IF-1 and N-formylmethionyl-tRNA(fMet); mRNA recruitment can occur at any time during PIC assembly.

The protein localises to the cytoplasm. One of the essential components for the initiation of protein synthesis. Stabilizes the binding of IF-2 and IF-3 on the 30S subunit to which N-formylmethionyl-tRNA(fMet) subsequently binds. Helps modulate mRNA selection, yielding the 30S pre-initiation complex (PIC). Upon addition of the 50S ribosomal subunit IF-1, IF-2 and IF-3 are released leaving the mature 70S translation initiation complex. The chain is Translation initiation factor IF-1 2 from Thiobacillus denitrificans (strain ATCC 25259 / T1).